A 1317-amino-acid polypeptide reads, in one-letter code: Toxin protein Tse5 (1317 aa).

A disordered region spans residues 395–419 (GRETRRRRDGQGRMLEEESPGKARY). Basic and acidic residues predominate over residues 403–415 (DGQGRMLEEESPG).

In terms of biological role, toxin secreted by the H1 type VI (H1-T6SS) secretion system that acts on bacterial target cells. The producing bacterium is protected by a cognate immunity protein. The polypeptide is Toxin protein Tse5 (Pseudomonas aeruginosa (strain ATCC 15692 / DSM 22644 / CIP 104116 / JCM 14847 / LMG 12228 / 1C / PRS 101 / PAO1)).